A 345-amino-acid polypeptide reads, in one-letter code: Isopentenyl-diphosphate delta-isomerase (345 aa).

6–7 (RK) is a substrate binding site. FMN-binding positions include 63 to 65 (SMT), Ser93, and Asn122. 93–95 (SQR) provides a ligand contact to substrate. Gln156 provides a ligand contact to substrate. Residue Glu157 coordinates Mg(2+). FMN contacts are provided by residues Lys188, Thr218, 265 to 267 (GLR), and 286 to 287 (AL).

The protein belongs to the IPP isomerase type 2 family. As to quaternary structure, homooctamer. Dimer of tetramers. FMN is required as a cofactor. Requires NADPH as cofactor. The cofactor is Mg(2+).

It is found in the cytoplasm. The catalysed reaction is isopentenyl diphosphate = dimethylallyl diphosphate. Involved in the biosynthesis of isoprenoids. Catalyzes the 1,3-allylic rearrangement of the homoallylic substrate isopentenyl (IPP) to its allylic isomer, dimethylallyl diphosphate (DMAPP). This Archaeoglobus fulgidus (strain ATCC 49558 / DSM 4304 / JCM 9628 / NBRC 100126 / VC-16) protein is Isopentenyl-diphosphate delta-isomerase.